The chain runs to 294 residues: 4-hydroxy-tetrahydrodipicolinate synthase (294 aa).

A pyruvate-binding site is contributed by T45. The Proton donor/acceptor role is filled by Y133. K161 (schiff-base intermediate with substrate) is an active-site residue. Residue I203 participates in pyruvate binding.

It belongs to the DapA family. As to quaternary structure, homotetramer; dimer of dimers.

The protein localises to the cytoplasm. It carries out the reaction L-aspartate 4-semialdehyde + pyruvate = (2S,4S)-4-hydroxy-2,3,4,5-tetrahydrodipicolinate + H2O + H(+). It functions in the pathway amino-acid biosynthesis; L-lysine biosynthesis via DAP pathway; (S)-tetrahydrodipicolinate from L-aspartate: step 3/4. Catalyzes the condensation of (S)-aspartate-beta-semialdehyde [(S)-ASA] and pyruvate to 4-hydroxy-tetrahydrodipicolinate (HTPA). The sequence is that of 4-hydroxy-tetrahydrodipicolinate synthase from Buchnera aphidicola subsp. Acyrthosiphon pisum (strain 5A).